Consider the following 563-residue polypeptide: Arginine--tRNA ligase (563 aa).

Positions 121–131 (PNIAKPFSIGH) match the 'HIGH' region motif.

The protein belongs to the class-I aminoacyl-tRNA synthetase family. Monomer.

Its subcellular location is the cytoplasm. It catalyses the reaction tRNA(Arg) + L-arginine + ATP = L-arginyl-tRNA(Arg) + AMP + diphosphate. This chain is Arginine--tRNA ligase, found in Streptococcus agalactiae serotype III (strain NEM316).